A 136-amino-acid polypeptide reads, in one-letter code: Large ribosomal subunit protein uL16 (136 aa).

It belongs to the universal ribosomal protein uL16 family. Part of the 50S ribosomal subunit.

Functionally, binds 23S rRNA and is also seen to make contacts with the A and possibly P site tRNAs. The protein is Large ribosomal subunit protein uL16 of Yersinia enterocolitica serotype O:8 / biotype 1B (strain NCTC 13174 / 8081).